A 150-amino-acid chain; its full sequence is Urease accessory protein UreE (150 aa).

Belongs to the UreE family.

The protein localises to the cytoplasm. Involved in urease metallocenter assembly. Binds nickel. Probably functions as a nickel donor during metallocenter assembly. The polypeptide is Urease accessory protein UreE (Streptococcus vestibularis).